The chain runs to 393 residues: MTAPATRKDLMIVNMGPHHPSMHGVLRLILTLDGEDVIDCEPILGYLHRGMEKIAENRTIIQYLPYVTRWDYLATMFTEAITVNGPERLSNIQVPKRASYIRVIMLELSRIASHLLWLGPFMADIGAQTPFFYIFRERELIYDLFEAATGMRMMHNFFRIGGVAADLPHGWIDKCLDFCNYFLTGVAEYQKLITQNPIFLERVEGIGTIRAEEALNWGLSGPMLRASGIEWDLRKIDQYECYDEFAWEVQWQKEGDSLARYLVRIGEMEESIKMIQQALEGIPGGPYENLEIRRFDRVKHPQWNDFEYRFIAKKTSPIFELSKQELYVRVEAPKGELGIFLIGDQSVFPWRWKIRPPGLINLQILPQVVKRMKLADIMTILGSIDIIMGEVDR.

The protein belongs to the complex I 49 kDa subunit family. In terms of assembly, NDH is composed of at least 16 different subunits, 5 of which are encoded in the nucleus.

The protein resides in the plastid. The protein localises to the chloroplast thylakoid membrane. It carries out the reaction a plastoquinone + NADH + (n+1) H(+)(in) = a plastoquinol + NAD(+) + n H(+)(out). The enzyme catalyses a plastoquinone + NADPH + (n+1) H(+)(in) = a plastoquinol + NADP(+) + n H(+)(out). NDH shuttles electrons from NAD(P)H:plastoquinone, via FMN and iron-sulfur (Fe-S) centers, to quinones in the photosynthetic chain and possibly in a chloroplast respiratory chain. The immediate electron acceptor for the enzyme in this species is believed to be plastoquinone. Couples the redox reaction to proton translocation, and thus conserves the redox energy in a proton gradient. The sequence is that of NAD(P)H-quinone oxidoreductase subunit H, chloroplastic from Ipomoea purpurea (Common morning glory).